The sequence spans 158 residues: GTP-dependent dephospho-CoA kinase (158 aa).

6 residues coordinate GTP: Asp-35, Val-36, Asp-54, Lys-56, Glu-109, and Asp-132.

Belongs to the GTP-dependent DPCK family.

The enzyme catalyses 3'-dephospho-CoA + GTP = GDP + CoA + H(+). It functions in the pathway cofactor biosynthesis; coenzyme A biosynthesis. Catalyzes the GTP-dependent phosphorylation of the 3'-hydroxyl group of dephosphocoenzyme A to form coenzyme A (CoA). This Methanococcus maripaludis (strain C7 / ATCC BAA-1331) protein is GTP-dependent dephospho-CoA kinase.